Here is a 180-residue protein sequence, read N- to C-terminus: Large ribosomal subunit protein uL6 (180 aa).

This sequence belongs to the universal ribosomal protein uL6 family. Part of the 50S ribosomal subunit.

In terms of biological role, this protein binds to the 23S rRNA, and is important in its secondary structure. It is located near the subunit interface in the base of the L7/L12 stalk, and near the tRNA binding site of the peptidyltransferase center. This is Large ribosomal subunit protein uL6 from Clostridium beijerinckii (strain ATCC 51743 / NCIMB 8052) (Clostridium acetobutylicum).